We begin with the raw amino-acid sequence, 400 residues long: MSHRVLGTERISPREEHVLTPNVTAILVAAGRGTRAGGGLAKQWRPLGARRVIDWTLAAFDRATQVSELLVVLHPEDMDLAATLTAAKPLRCVSGGATRSASVACALAAVADPEAIVLIHDAARPVVSADLIARVVAGVIETGAAAPALPVVDALWTGAGDRVTGMQPRDGLYRAQTPQGFHAGAIRDAHAAATGAAADDVEIARAAGMPVAIVAGDEQNFKITYPQDFARAAALLKERDKMDIRTGNGYDVHRFGTGDAVILCGVEVPHDRALMGHSDADVGMHAVTDAIYGALGDGDIGQHFPPSDPQWKGAASEIFLRHAVALAAERGYTITHMDCTLVCERPKIGPYHAVMKAKMSELMGLQPDQVSVKATTSERLGFTGREEGIAALATVTLVRT.

Residues 1–244 (MSHRVLGTER…LLKERDKMDI (244 aa)) form a 2-C-methyl-D-erythritol 4-phosphate cytidylyltransferase region. Residues 245-400 (RTGNGYDVHR…ALATVTLVRT (156 aa)) form a 2-C-methyl-D-erythritol 2,4-cyclodiphosphate synthase region. Residues Asp-251 and His-253 each coordinate a divalent metal cation. 4-CDP-2-C-methyl-D-erythritol 2-phosphate is bound by residues 251–253 (DVH) and 277–278 (HS). Residue His-285 coordinates a divalent metal cation. 4-CDP-2-C-methyl-D-erythritol 2-phosphate contacts are provided by residues 299–301 (DIG), 375–378 (TTSE), Phe-382, and Arg-385.

It in the N-terminal section; belongs to the IspD/TarI cytidylyltransferase family. IspD subfamily. The protein in the C-terminal section; belongs to the IspF family. A divalent metal cation serves as cofactor.

The enzyme catalyses 2-C-methyl-D-erythritol 4-phosphate + CTP + H(+) = 4-CDP-2-C-methyl-D-erythritol + diphosphate. The catalysed reaction is 4-CDP-2-C-methyl-D-erythritol 2-phosphate = 2-C-methyl-D-erythritol 2,4-cyclic diphosphate + CMP. It participates in isoprenoid biosynthesis; isopentenyl diphosphate biosynthesis via DXP pathway; isopentenyl diphosphate from 1-deoxy-D-xylulose 5-phosphate: step 2/6. It functions in the pathway isoprenoid biosynthesis; isopentenyl diphosphate biosynthesis via DXP pathway; isopentenyl diphosphate from 1-deoxy-D-xylulose 5-phosphate: step 4/6. Functionally, bifunctional enzyme that catalyzes the formation of 4-diphosphocytidyl-2-C-methyl-D-erythritol from CTP and 2-C-methyl-D-erythritol 4-phosphate (MEP) (IspD), and catalyzes the conversion of 4-diphosphocytidyl-2-C-methyl-D-erythritol 2-phosphate (CDP-ME2P) to 2-C-methyl-D-erythritol 2,4-cyclodiphosphate (ME-CPP) with a corresponding release of cytidine 5-monophosphate (CMP) (IspF). This is Bifunctional enzyme IspD/IspF from Dinoroseobacter shibae (strain DSM 16493 / NCIMB 14021 / DFL 12).